Here is an 88-residue protein sequence, read N- to C-terminus: Small ribosomal subunit protein eS21 (88 aa).

It belongs to the eukaryotic ribosomal protein eS21 family. In terms of assembly, component of the small ribosomal subunit. Mature ribosomes consist of a small (40S) and a large (60S) subunit. The 40S subunit contains about 33 different proteins and 1 molecule of RNA (18S). The 60S subunit contains about 49 different proteins and 3 molecules of RNA (25S, 5.8S and 5S).

It is found in the cytoplasm. In terms of biological role, required for the processing of the 20S rRNA-precursor to mature 18S rRNA in a late step of the maturation of 40S ribosomal subunits. Has a physiological role leading to 18S rRNA stability. This Aspergillus fumigatus (strain ATCC MYA-4609 / CBS 101355 / FGSC A1100 / Af293) (Neosartorya fumigata) protein is Small ribosomal subunit protein eS21 (rps21).